The chain runs to 694 residues: Polyphosphate kinase (694 aa).

N45 contributes to the ATP binding site. Mg(2+)-binding residues include R367 and R397. H427 serves as the catalytic Phosphohistidine intermediate. ATP is bound by residues Y460, R553, and H580.

Belongs to the polyphosphate kinase 1 (PPK1) family. Requires Mg(2+) as cofactor. In terms of processing, an intermediate of this reaction is the autophosphorylated ppk in which a phosphate is covalently linked to a histidine residue through a N-P bond.

It carries out the reaction [phosphate](n) + ATP = [phosphate](n+1) + ADP. In terms of biological role, catalyzes the reversible transfer of the terminal phosphate of ATP to form a long-chain polyphosphate (polyP). The chain is Polyphosphate kinase from Campylobacter coli.